A 243-amino-acid chain; its full sequence is Methylthioribulose-1-phosphate dehydratase (243 aa).

C90 is a binding site for substrate. Residues H108 and H110 each coordinate Zn(2+). The Proton donor/acceptor role is filled by E131. Position 193 (H193) interacts with Zn(2+).

The protein belongs to the aldolase class II family. MtnB subfamily. Zn(2+) is required as a cofactor.

It localises to the cytoplasm. The catalysed reaction is 5-(methylsulfanyl)-D-ribulose 1-phosphate = 5-methylsulfanyl-2,3-dioxopentyl phosphate + H2O. It participates in amino-acid biosynthesis; L-methionine biosynthesis via salvage pathway; L-methionine from S-methyl-5-thio-alpha-D-ribose 1-phosphate: step 2/6. In terms of biological role, catalyzes the dehydration of methylthioribulose-1-phosphate (MTRu-1-P) into 2,3-diketo-5-methylthiopentyl-1-phosphate (DK-MTP-1-P). The sequence is that of Methylthioribulose-1-phosphate dehydratase from Zygosaccharomyces rouxii (strain ATCC 2623 / CBS 732 / NBRC 1130 / NCYC 568 / NRRL Y-229).